The following is an 827-amino-acid chain: Mitogen-activated protein kinase kinase kinase kinase 1 (827 aa).

The Protein kinase domain maps to 17–274 (YDLLQRLGGG…ATKMLSHQLV (258 aa)). ATP-binding positions include 23–31 (LGGGTYGEV) and lysine 46. Aspartate 137 (proton acceptor) is an active-site residue. Threonine 165 carries the phosphothreonine; by autocatalysis modification. Serine 171 carries the phosphoserine; by autocatalysis modification. Threonine 175 is subject to Phosphothreonine; by autocatalysis. Residues 296–315 (KGLPVDIEDEEPEPPPAIPR) form a disordered region. Residue threonine 354 is modified to Phosphothreonine; by autocatalysis. The interval 359-485 (PPAHFGSTSP…KMRGKMENEK (127 aa)) is disordered. Phosphoserine occurs at positions 373, 375, 403, 405, and 419. Acidic residues predominate over residues 374 to 383 (DSDDDYDDVD). 2 stretches are compositionally biased toward pro residues: residues 429 to 443 (GPPP…PPAT) and 461 to 471 (APEPGQPPLVP). Residues 472 to 485 (PRKEKMRGKMENEK) are compositionally biased toward basic and acidic residues. Residues 501 to 806 (PLQIHSTAAW…TFRLLCSPRP (306 aa)) enclose the CNH domain. The residue at position 592 (serine 592) is a Phosphoserine.

The protein belongs to the protein kinase superfamily. STE Ser/Thr protein kinase family. STE20 subfamily. In terms of assembly, interacts with MAP3K1. Interacts with FBXW8. Interacts with CLNK (via its SH2 domain). Requires Mg(2+) as cofactor. Autophosphorylates: phosphorylation promotes ubiquitination by the Cul7-RING(FBXW8) ubiquitin-protein ligase complex, leading to its degradation by the proteasome. In terms of processing, tyrosine-phosphorylated after activation of hemopoietic cells. Post-translationally, ubiquitinated by the Cul7-RING(FBXW8) ubiquitin-protein ligase complex following autophosphorylation, leading to its degradation by the proteasome. Expressed in hemopoietic cells (at protein level). Ubiquitously expressed in all tissues examined at embryonic stage 16.5 dpc with high levels in lung, heart and fetal liver. In the neonate, expression is restricted to the tissues which undergo lineage decisions, lung, thymus, liver, kidney and brain. In the adult, expression is limited to hemopoietic organs, thymus, bone marrow, and spleen and to the testis.

It catalyses the reaction L-seryl-[protein] + ATP = O-phospho-L-seryl-[protein] + ADP + H(+). It carries out the reaction L-threonyl-[protein] + ATP = O-phospho-L-threonyl-[protein] + ADP + H(+). Functionally, serine/threonine-protein kinase, which plays a role in the response to environmental stress. Appears to act upstream of the JUN N-terminal pathway. Activator of the Hippo signaling pathway which plays a pivotal role in organ size control and tumor suppression by restricting proliferation and promoting apoptosis. MAP4Ks act in parallel to and are partially redundant with STK3/MST2 and STK4/MST2 in the phosphorylation and activation of LATS1/2, and establish MAP4Ks as components of the expanded Hippo pathway. May play a role in hematopoietic lineage decisions and growth regulation. Together with CLNK, it enhances CD3-triggered activation of T-cells and subsequent IL2 production. This is Mitogen-activated protein kinase kinase kinase kinase 1 (Map4k1) from Mus musculus (Mouse).